A 215-amino-acid chain; its full sequence is HTH-type transcriptional repressor FabR (215 aa).

The HTH tetR-type domain occupies lysine 10–leucine 70. The segment at residues serine 33–phenylalanine 52 is a DNA-binding region (H-T-H motif).

Homodimer.

It localises to the cytoplasm. In terms of biological role, represses the transcription of fabB, involved in unsaturated fatty acid (UFA) biosynthesis. By controlling UFA production, FabR directly influences the physical properties of the membrane bilayer. The sequence is that of HTH-type transcriptional repressor FabR from Escherichia coli O139:H28 (strain E24377A / ETEC).